Consider the following 302-residue polypeptide: MQVSIVNEHKYRELEPLNEMLVKRGGVKMIPEPKFVISGLVDNEEYVIKLRIDLADEFRYSYQNQQWTPFAPSTKNSKLSAITETEHRKETGATWNMRIVQFDKLLITREFNDIQRNVIHVEPNHKYIPVLTIQNVTTGKSTEFQFQQMEFIAVKSYQSARIRHTKRAPRKMNLAPGSSQKPQLIVPDILHSPTYGFTAAPPPFPFEYWLLYPQIQYQIQQLAYSLPMGPPMVPIHHIQCTEASQRVYAPEYGWNSILMPGAHKEQDDHYMFHHEIWAPQDHELEKLHVLTEQKNKPSETPQ.

Residues 5 to 180 (IVNEHKYREL…KMNLAPGSSQ (176 aa)) constitute a DNA-binding region (T-box).

The protein localises to the nucleus. This is Putative T-box protein 34 (tbx-34) from Caenorhabditis elegans.